The chain runs to 368 residues: Glutaminyl-peptide cyclotransferase (368 aa).

Positions 1–23 (MAGERRDSKAAAFFCLAWALCLA) are cleaved as a signal peptide. Asparagine 53 is a glycosylation site (N-linked (GlcNAc...) asparagine). The cysteines at positions 143 and 169 are disulfide-linked. Aspartate 164 lines the Zn(2+) pocket. Glutamate 207 serves as the catalytic Proton acceptor. Position 208 (glutamate 208) interacts with Zn(2+). Aspartate 254 serves as the catalytic Proton acceptor. N-linked (GlcNAc...) asparagine glycosylation is present at asparagine 292. Histidine 336 serves as a coordination point for Zn(2+). N-linked (GlcNAc...) asparagine glycosylation occurs at asparagine 352.

This sequence belongs to the glutaminyl-peptide cyclotransferase family. In terms of tissue distribution, expressed by the venom gland.

The protein localises to the secreted. The catalysed reaction is N-terminal L-glutaminyl-[peptide] = N-terminal 5-oxo-L-prolyl-[peptide] + NH4(+). In terms of biological role, responsible for the biosynthesis of pyroglutamyl peptides. Has a bias against acidic and tryptophan residues adjacent to the N-terminal glutaminyl residue and a lack of importance of chain length after the second residue. Also catalyzes N-terminal pyroglutamate formation. This chain is Glutaminyl-peptide cyclotransferase (QPCT), found in Boiga dendrophila (Mangrove snake).